Here is a 297-residue protein sequence, read N- to C-terminus: Release factor glutamine methyltransferase (297 aa).

Residues 134–138 (GTGSG), Asp157, and Asn200 contribute to the S-adenosyl-L-methionine site. 200–203 (NPPY) contacts substrate.

This sequence belongs to the protein N5-glutamine methyltransferase family. PrmC subfamily.

It carries out the reaction L-glutaminyl-[peptide chain release factor] + S-adenosyl-L-methionine = N(5)-methyl-L-glutaminyl-[peptide chain release factor] + S-adenosyl-L-homocysteine + H(+). In terms of biological role, methylates the class 1 translation termination release factors RF1/PrfA and RF2/PrfB on the glutamine residue of the universally conserved GGQ motif. In Bradyrhizobium diazoefficiens (strain JCM 10833 / BCRC 13528 / IAM 13628 / NBRC 14792 / USDA 110), this protein is Release factor glutamine methyltransferase.